The following is a 503-amino-acid chain: WAS/WASL-interacting protein family member 1 (503 aa).

Positions 1-14 are enriched in pro residues; it reads MPVPPPPAPPPPPT. The disordered stretch occupies residues 1–503; sequence MPVPPPPAPP…GAPPLPPIPR (503 aa). Positions 21–31 are enriched in polar residues; the sequence is EKPTLNKTEQA. Residues 32–49 form the WH2 domain; it reads GRNALLSDISKGKKLKKT. Residue Arg33 is modified to Asymmetric dimethylarginine. The interval 45–48 is binds actin; that stretch reads KLKK. Residues 65 to 104 are compositionally biased toward gly residues; that stretch reads AGAGGGGGGFGGGGGFGGGGGGGGGGSFGGGGPPGLGGLF. Positions 121 to 137 are enriched in low complexity; that stretch reads SGGSRPPLLPPGGRSTS. Omega-N-methylarginine occurs at positions 125 and 134. Composition is skewed to pro residues over residues 141–154, 161–174, 182–191, and 204–223; these read FSPPSGPGRFPVPS, PPEPQRNRMPPPRP, SIPPPVPSTP, and PPVPGGPRQPSPGPTPPPFP. Ser142 carries the phosphoserine modification. Position 234 is a phosphoserine (Ser234). A compositionally biased stretch (low complexity) spans 238 to 247; that stretch reads SPLSSSSPFS. Composition is skewed to pro residues over residues 282–298 and 306–323; these read VPPPPPQNNKPPVPSTP and APPPPPPPSRPGPPPLPP. Ser340 is modified (phosphoserine). Thr345 is subject to Phosphothreonine. Residues 346-371 show a composition bias toward pro residues; sequence PPLPSPGRSGPLPPPPSERPPPPVRD. At Ser350 the chain carries Phosphoserine. XRSGPXPPXP motif repeat units follow at residues 352–361, 374–383, and 410–419; these read GRSGPLPPPP and PRSGPRPPLP. Over residues 413–434 the composition is skewed to pro residues; it reads GPRPPLPPDRPSAGAPPPPPPS. Over residues 480–494 the composition is skewed to basic and acidic residues; sequence ARNESRSGSNRRERG.

Belongs to the verprolin family. Binds to WAS, profilin and actin. Binds to WASL. Interacts with DBNL. Interacts with FNBP1L (via the SH3 domain). In terms of tissue distribution, highly expressed in peripheral blood mononuclear cells, spleen, placenta, small intestine, colon and thymus. Lower expression in ovary, heart, brain, lung, liver, skeletal muscle, kidney, pancreas, prostate and testis.

The protein localises to the cytoplasmic vesicle. It is found in the cytoplasm. Its subcellular location is the cytoskeleton. It localises to the cell projection. The protein resides in the ruffle. In terms of biological role, plays a role in the reorganization of the actin cytoskeleton. Contributes with NCK1 and GRB2 in the recruitment and activation of WASL. May participate in regulating the subcellular localization of WASL, resulting in the disassembly of stress fibers in favor of filopodia formation. Plays a role in the formation of cell ruffles. Plays an important role in the intracellular motility of vaccinia virus by functioning as an adapter for recruiting WASL to vaccinia virus. The chain is WAS/WASL-interacting protein family member 1 (WIPF1) from Homo sapiens (Human).